A 185-amino-acid polypeptide reads, in one-letter code: Prenylated Rab acceptor protein 1 (185 aa).

Over 1 to 78 (MAAQKDQQKD…RNVEYYQSNY (78 aa)) the chain is Cytoplasmic. The required for interaction with prenylated RAB3A and VAMP2 stretch occupies residues 30-54 (AGREWLERRRATIRPWGTFVDQQRF). The next 2 helical transmembrane spans lie at 79-94 (VFVF…VTSP) and 95-112 (MLLV…ILYL). At 113 to 131 (RTLQSKLVLFGREVSPAHQ) the chain is on the cytoplasmic side. Helical transmembrane passes span 132–148 (YALA…LAGA) and 149–165 (GSAV…LIGS). Positions 165–185 (SHAAFHQIEPADGEELQMEPV) are required for interaction with GDI1. Over 166–185 (HAAFHQIEPADGEELQMEPV) the chain is Cytoplasmic. The interval 175–185 (ADGEELQMEPV) is required for interaction with prenylated RAB3A and VAMP2. The segment at 175-185 (ADGEELQMEPV) is homodimerization.

The protein belongs to the PRA1 family. As to quaternary structure, homodimers. Interacts specifically with both prenylated Rab proteins (including RAB3A and RAB1), and VAMP2 (synaptobrevin-2), in an exclusive way. Interacts with NDRG1. Interacts with free GDI1 in the absence of Rab proteins. Also interacts with PCLO. Ubiquitous.

The protein localises to the cell membrane. It localises to the cytoplasm. The protein resides in the golgi apparatus. It is found in the cytoplasmic vesicle. Its subcellular location is the secretory vesicle. The protein localises to the synaptic vesicle. Functionally, general Rab protein regulator required for vesicle formation from the Golgi complex. May control vesicle docking and fusion by mediating the action of Rab GTPases to the SNARE complexes. In addition it inhibits the removal of Rab GTPases from the membrane by GDI1. In Rattus norvegicus (Rat), this protein is Prenylated Rab acceptor protein 1 (Rabac1).